Consider the following 193-residue polypeptide: Large ribosomal subunit protein uL18 (193 aa).

This sequence belongs to the universal ribosomal protein uL18 family. In terms of assembly, part of the 50S ribosomal subunit. Contacts the 5S and 23S rRNAs.

In terms of biological role, this is one of the proteins that bind and probably mediate the attachment of the 5S RNA into the large ribosomal subunit, where it forms part of the central protuberance. This is Large ribosomal subunit protein uL18 from Methanococcus vannielii (strain ATCC 35089 / DSM 1224 / JCM 13029 / OCM 148 / SB).